The chain runs to 141 residues: Calcitonin (141 aa).

A signal peptide spans 1-25 (MGFQKFSPFLALSILVLLQAGSLHA). A propeptide spanning residues 26 to 82 (APFRSALESSPADPATLSEDEARLLLAALVQDYVQMKASELEQEQEREGSSLDSPRS) is cleaved from the precursor. A Phosphoserine modification is found at serine 43. Disordered stretches follow at residues 64–85 (SELE…SKRC) and 111–141 (IGVG…QNAN). Cysteine 85 and cysteine 91 form a disulfide bridge. Proline 116 carries the post-translational modification Proline amide. Residues 118–132 (KKRDMSSDLERDHRP) show a composition bias toward basic and acidic residues.

The protein belongs to the calcitonin family.

It is found in the secreted. Calcitonin is a peptide hormone that causes a rapid but short-lived drop in the level of calcium and phosphate in blood by promoting the incorporation of those ions in the bones. Calcitonin function is mediated by the calcitonin receptor/CALCR and the CALCR-RAMP2 (AMYR2) receptor complex. In terms of biological role, katacalcin is a potent plasma calcium-lowering peptide. This Homo sapiens (Human) protein is Calcitonin.